A 500-amino-acid polypeptide reads, in one-letter code: Lysine--tRNA ligase (500 aa).

The Mg(2+) site is built by Glu-410 and Glu-417.

It belongs to the class-II aminoacyl-tRNA synthetase family. Homodimer. Requires Mg(2+) as cofactor.

Its subcellular location is the cytoplasm. It catalyses the reaction tRNA(Lys) + L-lysine + ATP = L-lysyl-tRNA(Lys) + AMP + diphosphate. In Shewanella sp. (strain ANA-3), this protein is Lysine--tRNA ligase.